Consider the following 174-residue polypeptide: Cytidylate kinase (174 aa).

An ATP-binding site is contributed by 7-15 (GLPGTGTTT).

This sequence belongs to the cytidylate kinase family. Type 2 subfamily.

It localises to the cytoplasm. It catalyses the reaction CMP + ATP = CDP + ADP. It carries out the reaction dCMP + ATP = dCDP + ADP. The protein is Cytidylate kinase of Methanococcus vannielii (strain ATCC 35089 / DSM 1224 / JCM 13029 / OCM 148 / SB).